A 333-amino-acid polypeptide reads, in one-letter code: Probable tRNA pseudouridine synthase B (333 aa).

A compositionally biased stretch (basic and acidic residues) spans 1-14 (MKCPSREVFSKFEE). The tract at residues 1-27 (MKCPSREVFSKFEESTNPQWGKPPSQR) is disordered. Asp-71 serves as the catalytic Nucleophile. The PUA domain maps to 238–313 (LPKIWVRDSA…LVARTDRVVM (76 aa)).

Belongs to the pseudouridine synthase TruB family. Type 2 subfamily.

It carries out the reaction uridine(55) in tRNA = pseudouridine(55) in tRNA. Functionally, could be responsible for synthesis of pseudouridine from uracil-55 in the psi GC loop of transfer RNAs. This Pyrobaculum aerophilum (strain ATCC 51768 / DSM 7523 / JCM 9630 / CIP 104966 / NBRC 100827 / IM2) protein is Probable tRNA pseudouridine synthase B.